Reading from the N-terminus, the 233-residue chain is Lipoprotein-releasing system ATP-binding protein LolD (233 aa).

The ABC transporter domain occupies 6–233 (LQCDNLCKRY…TAELSLMGAE (228 aa)). Residue 42 to 49 (GSSGSGKS) coordinates ATP.

It belongs to the ABC transporter superfamily. Lipoprotein translocase (TC 3.A.1.125) family. As to quaternary structure, the complex is composed of two ATP-binding proteins (LolD) and two transmembrane proteins (LolC and LolE).

The protein localises to the cell inner membrane. Part of the ABC transporter complex LolCDE involved in the translocation of mature outer membrane-directed lipoproteins, from the inner membrane to the periplasmic chaperone, LolA. Responsible for the formation of the LolA-lipoprotein complex in an ATP-dependent manner. The polypeptide is Lipoprotein-releasing system ATP-binding protein LolD (Shigella flexneri).